We begin with the raw amino-acid sequence, 436 residues long: Serine--tRNA ligase (436 aa).

239-241 (TAE) contributes to the L-serine binding site. 270–272 (RLE) provides a ligand contact to ATP. Position 293 (E293) interacts with L-serine. 357–360 (EISS) contributes to the ATP binding site. S393 provides a ligand contact to L-serine.

It belongs to the class-II aminoacyl-tRNA synthetase family. Type-1 seryl-tRNA synthetase subfamily. In terms of assembly, homodimer. The tRNA molecule binds across the dimer.

The protein resides in the cytoplasm. It catalyses the reaction tRNA(Ser) + L-serine + ATP = L-seryl-tRNA(Ser) + AMP + diphosphate + H(+). The catalysed reaction is tRNA(Sec) + L-serine + ATP = L-seryl-tRNA(Sec) + AMP + diphosphate + H(+). Its pathway is aminoacyl-tRNA biosynthesis; selenocysteinyl-tRNA(Sec) biosynthesis; L-seryl-tRNA(Sec) from L-serine and tRNA(Sec): step 1/1. Catalyzes the attachment of serine to tRNA(Ser). Is also able to aminoacylate tRNA(Sec) with serine, to form the misacylated tRNA L-seryl-tRNA(Sec), which will be further converted into selenocysteinyl-tRNA(Sec). The polypeptide is Serine--tRNA ligase (Blochmanniella floridana).